The following is a 173-amino-acid chain: Large ribosomal subunit protein uL15 (173 aa).

The span at 1-11 (MKLNEIRDNQG) shows a compositional bias: basic and acidic residues. The disordered stretch occupies residues 1-50 (MKLNEIRDNQGARKSRVRVGRGIGSGLGKTGGRGQKGQKSRSGVSINGFE). The segment covering 21-35 (RGIGSGLGKTGGRGQ) has biased composition (gly residues).

Belongs to the universal ribosomal protein uL15 family. In terms of assembly, part of the 50S ribosomal subunit.

Binds to the 23S rRNA. The chain is Large ribosomal subunit protein uL15 from Rhizorhabdus wittichii (strain DSM 6014 / CCUG 31198 / JCM 15750 / NBRC 105917 / EY 4224 / RW1) (Sphingomonas wittichii).